The chain runs to 107 residues: Large ribosomal subunit protein bL21 (107 aa).

It belongs to the bacterial ribosomal protein bL21 family. Part of the 50S ribosomal subunit. Contacts protein L20.

Its function is as follows. This protein binds to 23S rRNA in the presence of protein L20. The protein is Large ribosomal subunit protein bL21 of Chlamydia trachomatis serovar L2 (strain ATCC VR-902B / DSM 19102 / 434/Bu).